The primary structure comprises 651 residues: A-type voltage-gated potassium channel KCND1 (651 aa).

Residues 1 to 183 (MAAGVATWLP…RAFENPHTST (183 aa)) are Cytoplasmic-facing. The segment at 2 to 20 (AAGVATWLPFARAAAVGWL) is interaction with KCNIP1, KCNIP2, and other family members. Residues H104, C131, and C132 each contribute to the Zn(2+) site. The disordered stretch occupies residues 144–164 (AERLAEDEEAEQAGEGPALPA). Residues 184-205 (AALVFYYVTGFFIAVSVIANVV) form a helical membrane-spanning segment. Topologically, residues 206–230 (ETIPCRGTPRWPSKEQSCGDRFPTA) are extracellular. Residues 231 to 252 (FFCMDTACVLIFTGEYLLRLFA) form a helical membrane-spanning segment. The Cytoplasmic segment spans residues 253–263 (APSRCRFLRSV). Residues 264-284 (MSLIDVVAILPYYIGLFVPKN) traverse the membrane as a helical segment. The Extracellular portion of the chain corresponds to 285–287 (DDV). The chain crosses the membrane as a helical; Voltage-sensor span at residues 288–308 (SGAFVTLRVFRVFRIFKFSRH). Topologically, residues 309 to 323 (SQGLRILGYTLKSCA) are cytoplasmic. Positions 310–323 (QGLRILGYTLKSCA) are S4-S5 linker. A helical membrane pass occupies residues 324 to 345 (SELGFLLFSLTMAIIIFATVMF). Over 346–359 (YAEKGTSKTNFTSI) the chain is Extracellular. A glycan (N-linked (GlcNAc...) asparagine) is linked at N355. An intramembrane region (helical) is located at residues 360–371 (PAAFWYTIVTMT). The Selectivity filter signature appears at 372 to 377 (TLGYGD). Residues 372 to 379 (TLGYGDMV) lie within the membrane without spanning it. Over 380–386 (PSTIAGK) the chain is Extracellular. The helical transmembrane segment at 387–415 (IFGSICSLSGVLVIALPVPVIVSNFSRIY) threads the bilayer. At 416–651 (HQNQRADKRR…LPETVKISSL (236 aa)) the chain is on the cytoplasmic side. S458 is subject to Phosphoserine. The interval 474-489 (FEQQHHHLLHCLEKTT) is required for dendritic targeting. Position 555 is a phosphoserine (S555). Disordered stretches follow at residues 566–585 (RRSP…HDSL) and 601–651 (IPTP…ISSL). Over residues 626-637 (TPNTTLRNSSLG) the composition is skewed to polar residues.

It belongs to the potassium channel family. D (Shal) (TC 1.A.1.2) subfamily. Kv4.1/KCND1 sub-subfamily. Component of heteromultimeric potassium channels. Identified in potassium channel complexes containing KCND1, KCND2, KCND3, KCNIP1, KCNIP2, KCNIP3, KCNIP4, DPP6 and DPP10.

Its subcellular location is the cell membrane. The enzyme catalyses K(+)(in) = K(+)(out). Functionally, A-type voltage-gated potassium channel that mediates transmembrane potassium transport in excitable membranes in the brain. Mediates A-type current I(SA) in suprachiasmatic nucleus (SCN) neurons. Exhibits a low-threshold A-type current with a hyperpolarized steady-state inactivation midpoint and the recovery process was steeply voltage-dependent, with recovery being markedly faster at more negative potentials. May regulates repetitive firing rates in the suprachiasmatic nucleus (SCN) neurons and circadian rhythms in neuronal excitability and behavior. Contributes to the regulation of the circadian rhythm of action potential firing in suprachiasmatic nucleus neurons, which regulates the circadian rhythm of locomotor activity. The regulatory subunit KCNIP1 modulates the kinetics of channel inactivation, increases the current amplitudes and accelerates recovery from inactivation, shifts activation in a depolarizing direction. The regulatory subunit DPP10 decreases the voltage sensitivity of the inactivation channel gating. This is A-type voltage-gated potassium channel KCND1 from Mus musculus (Mouse).